Reading from the N-terminus, the 288-residue chain is CBY1-interacting BAR domain-containing protein 1 (288 aa).

The transit peptide at 1–47 directs the protein to the mitochondrion; it reads MLRRSLENRDAQTRQLQDAVTNVEKHFGELCQIFAAYVRKTARLRDK. The tract at residues 10–220 is BAR-like; that stretch reads DAQTRQLQDA…KIDEEEDLEV (211 aa). Residues 107–176 are a coiled coil; the sequence is KMKRDDLKAT…ETIDNFEKQK (70 aa). The disordered stretch occupies residues 266-288; sequence RKDHQTEDDDEEDEDLDVTEEEN. The segment covering 271 to 288 has biased composition (acidic residues); it reads TEDDDEEDEDLDVTEEEN.

Belongs to the CIBAR family. In terms of assembly, homodimer (via BAR-like domain). Heterodimer with FAM92B (via BAR-like domains). Interacts (via BAR-like domain) with CBY1; this interaction is required for targeting FAM92A to centriole and cilium basal body. Interacts (via BAR-like domain) with CBY3; both proteins form a ninefold symmetric structure at the flagellar base; are recruited to the annulus in a mutually dependent manner and regulate annulus positionning.

The protein resides in the cytoplasm. It localises to the cytoskeleton. It is found in the microtubule organizing center. The protein localises to the centrosome. Its subcellular location is the centriole. The protein resides in the cilium basal body. It localises to the cell projection. It is found in the cilium. The protein localises to the nucleus. Its subcellular location is the mitochondrion inner membrane. The protein resides in the flagellum. Functionally, plays a critical role in regulating mitochondrial ultrastructure and function by maintaining the integrity of mitochondrial morphology, particularly the organization of cristae. Preferentially binds to negatively charged phospholipids like cardiolipin and phosphatidylinositol 4,5-bisphosphate enhancing its interaction with mitochondrial membranes. Induces membrane curvature and tubulation, which are critical for maintaining mitochondrial ultrastructure and the organization of cristae. Plays a crucial role in ciliogenesis. May play a role in limb development through its role in ciliogenesis. Plays a key role in the correct positioning of the annulus, a septin-based ring structure in the sperm flagellum, serving both as a physical barrier and a membrane diffusion barrier that separates the midpiece (MP) from the principal piece (PP). This positioning is essential for proper sperm motility and function. Interacts with CBY3 to form a complex which localizes to the curved membrane region of the flagellar pocket. By doing so, may provide stability and rigidity to the periannular membrane to prevent membrane deformation. This function is crucial for halting annulus migration at the proximal end of the fibrous sheath-containing PP. The protein is CBY1-interacting BAR domain-containing protein 1 of Bos taurus (Bovine).